The primary structure comprises 541 residues: Molybdate transporter 1 (541 aa).

Transmembrane regions (helical) follow at residues 24–44 (LLLS…PLLL), 58–78 (LLFS…PLPV), 98–118 (TVAA…TGGL), 137–157 (AGMS…GWLW), and 168–188 (GLGE…GLVV). The interval 193 to 213 (QQQQQQQSGEKPQERRKKRSK) is disordered. 2 helical membrane-spanning segments follow: residues 214 to 234 (MPVQ…FAVV) and 287 to 307 (MAIA…SALA). Residues 317–366 (PQLYADDESSDSPLSPSPSASSSSLSSAPPQTPSAETPKPLSSPTSAEEG) are disordered. Low complexity predominate over residues 327–351 (DSPLSPSPSASSSSLSSAPPQTPSA). The next 2 membrane-spanning stretches (helical) occupy residues 413-433 (IILL…PGLL) and 435-455 (LLGK…GVEL). The interval 510 to 541 (TEKGRGGEQGLLGEEEEEEEQGRVDEESPLLR) is disordered.

The protein belongs to the SLC26A/SulP transporter (TC 2.A.53) family.

The protein resides in the vacuole membrane. Exports stored molybdate from the vacuole into the cytosol, making it available for molybdate cofactor (Moco) biosynthesis. Plays a role in molybdate homeostasis as high cytosolic levels of molybdate are toxic to cells. Not required for molybdate import into cells. The protein is Molybdate transporter 1 of Neurospora crassa (strain ATCC 24698 / 74-OR23-1A / CBS 708.71 / DSM 1257 / FGSC 987).